A 129-amino-acid chain; its full sequence is HTH-type transcriptional regulator DdrOP3 (129 aa).

The HTH cro/C1-type domain maps to 7–61 (LRELRQERGLRLKDIAGAAQISVPYLSDLERGRTNPSLETLQSLASTYGITVHDL). Positions 18–37 (LKDIAGAAQISVPYLSDLER) form a DNA-binding region, H-T-H motif.

Post-translationally, cleaved between Leu-106 and Arg-107 by the IrrE metalloprotease after exposure to radiation. Cleavage inactivates DdrOP3, leading to derepression of the target genes.

In terms of biological role, repressor specific for genes preceded by a radiation/desiccation response motif (RDRM) site, which is present upstream of several radiation-induced genes. The sequence is that of HTH-type transcriptional regulator DdrOP3 from Deinococcus deserti (strain DSM 17065 / CIP 109153 / LMG 22923 / VCD115).